Consider the following 211-residue polypeptide: Potassium-transporting ATPase KdpC subunit (211 aa).

Residues 13–35 (VVTMVLTGLLYPLAVTGLAQLLF) traverse the membrane as a helical segment.

Belongs to the KdpC family. The system is composed of three essential subunits: KdpA, KdpB and KdpC.

It localises to the cell membrane. In terms of biological role, part of the high-affinity ATP-driven potassium transport (or Kdp) system, which catalyzes the hydrolysis of ATP coupled with the electrogenic transport of potassium into the cytoplasm. This subunit acts as a catalytic chaperone that increases the ATP-binding affinity of the ATP-hydrolyzing subunit KdpB by the formation of a transient KdpB/KdpC/ATP ternary complex. The polypeptide is Potassium-transporting ATPase KdpC subunit (Myxococcus xanthus).